A 320-amino-acid chain; its full sequence is tRNA dimethylallyltransferase (320 aa).

ATP is bound at residue 14–21 (GPTASGKT). Position 16–21 (16–21 (TASGKT)) interacts with substrate. Interaction with substrate tRNA stretches follow at residues 39–42 (DSAL) and 163–167 (QRLQR).

This sequence belongs to the IPP transferase family. In terms of assembly, monomer. The cofactor is Mg(2+).

It catalyses the reaction adenosine(37) in tRNA + dimethylallyl diphosphate = N(6)-dimethylallyladenosine(37) in tRNA + diphosphate. Catalyzes the transfer of a dimethylallyl group onto the adenine at position 37 in tRNAs that read codons beginning with uridine, leading to the formation of N6-(dimethylallyl)adenosine (i(6)A). The polypeptide is tRNA dimethylallyltransferase (Thioalkalivibrio sulfidiphilus (strain HL-EbGR7)).